The following is a 430-amino-acid chain: KICSTOR complex protein kaptin (430 aa).

A disordered region spans residues 410–430 (RKHQQGLGDRVGPRPVEHPAS). Over residues 420–430 (VGPRPVEHPAS) the composition is skewed to basic and acidic residues.

In terms of assembly, part of the KICSTOR complex composed of KPTN, ITFG2, KICS2 and SZT2. SZT2 probably serves as a link between the other three proteins in the KICSTOR complex and mediates the direct interaction with the GATOR1 complex. May associate with F-actin filaments.

The protein resides in the lysosome membrane. It is found in the cell projection. It localises to the lamellipodium. Its subcellular location is the stereocilium. As part of the KICSTOR complex functions in the amino acid-sensing branch of the TORC1 signaling pathway. Recruits, in an amino acid-independent manner, the GATOR1 complex to the lysosomal membranes and allows its interaction with GATOR2 and the RAG GTPases. Functions upstream of the RAG GTPases and is required to negatively regulate mTORC1 signaling in absence of amino acids. In absence of the KICSTOR complex mTORC1 is constitutively localized to the lysosome and activated. The KICSTOR complex is also probably involved in the regulation of mTORC1 by glucose. The protein is KICSTOR complex protein kaptin of Mus musculus (Mouse).